The chain runs to 84 residues: Acetylcholine receptor subunit alpha (84 aa).

2 disulfides stabilise this stretch: cysteine 7–cysteine 21 and cysteine 71–cysteine 72. The N-linked (GlcNAc...) asparagine glycan is linked to asparagine 20.

Belongs to the ligand-gated ion channel (TC 1.A.9) family. Acetylcholine receptor (TC 1.A.9.1) subfamily. Alpha-1/CHRNA1 sub-subfamily. One of the alpha chains that assemble within the acetylcholine receptor, a pentamer of two alpha chains, a beta, a delta, and a gamma (in immature muscle) or epsilon (in mature muscle) chains. The muscle heteropentamer composed of alpha-1, beta-1, delta, epsilon subunits interacts with the alpha-conotoxin ImII.

Its subcellular location is the postsynaptic cell membrane. The protein localises to the cell membrane. It carries out the reaction K(+)(in) = K(+)(out). It catalyses the reaction Na(+)(in) = Na(+)(out). Its function is as follows. Upon acetylcholine binding, the AChR responds by an extensive change in conformation that affects all subunits and leads to opening of an ion-conducting channel across the plasma membrane. The chain is Acetylcholine receptor subunit alpha (CHRNA1) from Felis catus (Cat).